The sequence spans 297 residues: MATNLRGVMAALLTPFDQQQALDKASLRRLVQFNIQQGIDGLYVGGSTGEAFVQSLSEREQVLEIVAEEAKGKIKLIAHVGCVSTAESQQLAASAKRYGFDAVSAVTPFYYPFSFEEHCDHYRAIIDSADGLPMVVYNIPALSGVKLTLDQINTLVTLPGVGALKQTSGDLYQMEQIRREHPDLVLYNGYDEIFASGLLAGADGGIGSTYNIMGWRYQGIVKALKEGDIQTAQKLQTECNKVIDLLIKTGVFRGLKTVLHYMDVVSVPLCRKPFGPVDEKYLPELKALAQQLMQERG.

Positions 47 and 48 each coordinate aceneuramate. The active-site Proton donor is the tyrosine 137. Lysine 165 (schiff-base intermediate with substrate) is an active-site residue. Aceneuramate is bound by residues threonine 167, glycine 189, aspartate 191, glutamate 192, and serine 208.

It belongs to the DapA family. NanA subfamily. As to quaternary structure, homotetramer.

It is found in the cytoplasm. It catalyses the reaction aceneuramate = aldehydo-N-acetyl-D-mannosamine + pyruvate. Its pathway is amino-sugar metabolism; N-acetylneuraminate degradation; D-fructose 6-phosphate from N-acetylneuraminate: step 1/5. Functionally, catalyzes the reversible aldol cleavage of N-acetylneuraminic acid (sialic acid; Neu5Ac) to form pyruvate and N-acetylmannosamine (ManNAc) via a Schiff base intermediate. The polypeptide is N-acetylneuraminate lyase (Escherichia coli O139:H28 (strain E24377A / ETEC)).